A 160-amino-acid chain; its full sequence is Phosphopantetheine adenylyltransferase (160 aa).

A substrate-binding site is contributed by Ser-9. Residues 9–10 (SF) and His-17 each bind ATP. Residues Lys-41, Val-73, and Lys-87 each contribute to the substrate site. Residues 88–90 (GLR), Glu-98, and 122–128 (YSFVSSS) contribute to the ATP site.

Belongs to the bacterial CoaD family. In terms of assembly, homohexamer. Requires Mg(2+) as cofactor.

The protein resides in the cytoplasm. It carries out the reaction (R)-4'-phosphopantetheine + ATP + H(+) = 3'-dephospho-CoA + diphosphate. Its pathway is cofactor biosynthesis; coenzyme A biosynthesis; CoA from (R)-pantothenate: step 4/5. Functionally, reversibly transfers an adenylyl group from ATP to 4'-phosphopantetheine, yielding dephospho-CoA (dPCoA) and pyrophosphate. This is Phosphopantetheine adenylyltransferase from Mycobacterium leprae (strain TN).